The primary structure comprises 364 residues: Chaperone protein DnaJ (364 aa).

The J domain occupies 4–69 (DYYEILGLSK…NKKAKYDRFG (66 aa)). The CR-type zinc finger occupies 135-213 (GYKNNINITR…CKGKGSLTKQ (79 aa)). 8 residues coordinate Zn(2+): C148, C151, C165, C168, C187, C190, C201, and C204. CXXCXGXG motif repeat units lie at residues 148-155 (CDSCLGKK), 165-172 (CNMCNGSG), 187-194 (CSKCYGEG), and 201-208 (CKSCKGKG).

The protein belongs to the DnaJ family. In terms of assembly, homodimer. The cofactor is Zn(2+).

Its subcellular location is the cytoplasm. Its function is as follows. Participates actively in the response to hyperosmotic and heat shock by preventing the aggregation of stress-denatured proteins and by disaggregating proteins, also in an autonomous, DnaK-independent fashion. Unfolded proteins bind initially to DnaJ; upon interaction with the DnaJ-bound protein, DnaK hydrolyzes its bound ATP, resulting in the formation of a stable complex. GrpE releases ADP from DnaK; ATP binding to DnaK triggers the release of the substrate protein, thus completing the reaction cycle. Several rounds of ATP-dependent interactions between DnaJ, DnaK and GrpE are required for fully efficient folding. Also involved, together with DnaK and GrpE, in the DNA replication of plasmids through activation of initiation proteins. The protein is Chaperone protein DnaJ of Borreliella burgdorferi (strain ATCC 35210 / DSM 4680 / CIP 102532 / B31) (Borrelia burgdorferi).